A 319-amino-acid polypeptide reads, in one-letter code: Beta-ketoacyl-[acyl-carrier-protein] synthase III (319 aa).

Residues Cys-113 and His-246 contribute to the active site. An ACP-binding region spans residues 247 to 251 (QANIR). Residue Asn-276 is part of the active site.

This sequence belongs to the thiolase-like superfamily. FabH family. As to quaternary structure, homodimer.

The protein localises to the cytoplasm. The enzyme catalyses malonyl-[ACP] + acetyl-CoA + H(+) = 3-oxobutanoyl-[ACP] + CO2 + CoA. Its pathway is lipid metabolism; fatty acid biosynthesis. Functionally, catalyzes the condensation reaction of fatty acid synthesis by the addition to an acyl acceptor of two carbons from malonyl-ACP. Catalyzes the first condensation reaction which initiates fatty acid synthesis and may therefore play a role in governing the total rate of fatty acid production. Possesses both acetoacetyl-ACP synthase and acetyl transacylase activities. Its substrate specificity determines the biosynthesis of branched-chain and/or straight-chain of fatty acids. This Ehrlichia canis (strain Jake) protein is Beta-ketoacyl-[acyl-carrier-protein] synthase III.